We begin with the raw amino-acid sequence, 244 residues long: MGKRILVQRRGRGGSQFRSPSWKRDGPVRYPPNISGRGIVVEILHEPGLNAPVAKIRMENGVEFFNYAAEGLYVGQVIQVGPDAPPAVGNVLPLGKIPEGTMVFNVEKRFGDGGKFARSGGTYALVIGQRPEENKTIVRLPSGRVIEVDARGRATIGIVAGGGRVEKPFVKAGKKYHRARAKSWKYPTVRGKAMSPYAHPHGGGSHQKGGTPVPKTAPPGQKVGFIGSRCTGRGCVRARAQQKQ.

Positions 1–12 (MGKRILVQRRGR) are enriched in basic residues. Disordered stretches follow at residues 1-26 (MGKR…KRDG) and 193-225 (AMSP…KVGF).

It belongs to the universal ribosomal protein uL2 family. In terms of assembly, part of the 50S ribosomal subunit. Forms a bridge to the 30S subunit in the 70S ribosome.

In terms of biological role, one of the primary rRNA binding proteins. Required for association of the 30S and 50S subunits to form the 70S ribosome, for tRNA binding and peptide bond formation. It has been suggested to have peptidyltransferase activity; this is somewhat controversial. Makes several contacts with the 16S rRNA in the 70S ribosome. The protein is Large ribosomal subunit protein uL2 of Pyrobaculum calidifontis (strain DSM 21063 / JCM 11548 / VA1).